A 370-amino-acid chain; its full sequence is ECF RNA polymerase sigma factor SigG (370 aa).

The segment at 63 to 129 is sigma-70 factor domain-2; that stretch reads EPYRRELLAH…LTALEGRRRR (67 aa). The Polymerase core binding signature appears at 85 to 88; sequence DLVQ. The sigma-70 factor domain-4 stretch occupies residues 180–232; the sequence is LAFVAALQHLSPRQRAVLLLRDVLQWKSAEVADAIGTSTVAVNSLLQRARSQL. The segment at residues 207–226 is a DNA-binding region (H-T-H motif); it reads SAEVADAIGTSTVAVNSLLQ.

This sequence belongs to the sigma-70 factor family. ECF subfamily. Interacts transiently with the RNA polymerase catalytic core formed by RpoA, RpoB, RpoC and RpoZ (2 alpha, 1 beta, 1 beta' and 1 omega subunit) to form the RNA polymerase holoenzyme that can initiate transcription.

Sigma factors are initiation factors that promote the attachment of RNA polymerase to specific initiation sites and are then released. Extracytoplasmic function (ECF) sigma factors are held in an inactive form by a cognate anti-sigma factor until released, although no anti-sigma factor is known for this protein. May be involved in host intracellular survival after infection (strains H37Rv and CDC 1551). A role in the SOS response is controversial; it has been seen in strain CDC 1551 but not in H37Rv. This Mycobacterium tuberculosis (strain CDC 1551 / Oshkosh) protein is ECF RNA polymerase sigma factor SigG (sigG).